The primary structure comprises 515 residues: Bifunctional purine biosynthesis protein PurH (515 aa).

The 144-residue stretch at 1–144 (MGRKALISVS…KNHKFVTIIV (144 aa)) folds into the MGS-like domain.

The protein belongs to the PurH family.

The enzyme catalyses (6R)-10-formyltetrahydrofolate + 5-amino-1-(5-phospho-beta-D-ribosyl)imidazole-4-carboxamide = 5-formamido-1-(5-phospho-D-ribosyl)imidazole-4-carboxamide + (6S)-5,6,7,8-tetrahydrofolate. It catalyses the reaction IMP + H2O = 5-formamido-1-(5-phospho-D-ribosyl)imidazole-4-carboxamide. It functions in the pathway purine metabolism; IMP biosynthesis via de novo pathway; 5-formamido-1-(5-phospho-D-ribosyl)imidazole-4-carboxamide from 5-amino-1-(5-phospho-D-ribosyl)imidazole-4-carboxamide (10-formyl THF route): step 1/1. It participates in purine metabolism; IMP biosynthesis via de novo pathway; IMP from 5-formamido-1-(5-phospho-D-ribosyl)imidazole-4-carboxamide: step 1/1. This chain is Bifunctional purine biosynthesis protein PurH, found in Persephonella marina (strain DSM 14350 / EX-H1).